A 109-amino-acid polypeptide reads, in one-letter code: Cytochrome c6 (109 aa).

The first 25 residues, M1–S25, serve as a signal peptide directing secretion. C39, C42, H43, and M83 together coordinate heme c.

It belongs to the cytochrome c family. PetJ subfamily. Monomer. Post-translationally, binds 1 heme c group covalently per subunit.

The protein resides in the plastid. The protein localises to the chloroplast thylakoid lumen. Functionally, functions as an electron carrier between membrane-bound cytochrome b6-f and photosystem I in oxygenic photosynthesis. The sequence is that of Cytochrome c6 (petJ) from Cyanidium caldarium (Red alga).